A 179-amino-acid chain; its full sequence is Ribosome maturation factor RimM (179 aa).

Residues 95-174 (KDEFFYFDIL…QIFCTQDAFL (80 aa)) form the PRC barrel domain.

This sequence belongs to the RimM family. Binds ribosomal protein uS19.

The protein resides in the cytoplasm. In terms of biological role, an accessory protein needed during the final step in the assembly of 30S ribosomal subunit, possibly for assembly of the head region. Essential for efficient processing of 16S rRNA. May be needed both before and after RbfA during the maturation of 16S rRNA. It has affinity for free ribosomal 30S subunits but not for 70S ribosomes. The sequence is that of Ribosome maturation factor RimM from Campylobacter jejuni subsp. doylei (strain ATCC BAA-1458 / RM4099 / 269.97).